The following is a 517-amino-acid chain: Bifunctional purine biosynthesis protein PurH (517 aa).

One can recognise an MGS-like domain in the interval 1-145 (MSPLALVSVS…KNHKDVSVLV (145 aa)).

Belongs to the PurH family.

It carries out the reaction (6R)-10-formyltetrahydrofolate + 5-amino-1-(5-phospho-beta-D-ribosyl)imidazole-4-carboxamide = 5-formamido-1-(5-phospho-D-ribosyl)imidazole-4-carboxamide + (6S)-5,6,7,8-tetrahydrofolate. The catalysed reaction is IMP + H2O = 5-formamido-1-(5-phospho-D-ribosyl)imidazole-4-carboxamide. It participates in purine metabolism; IMP biosynthesis via de novo pathway; 5-formamido-1-(5-phospho-D-ribosyl)imidazole-4-carboxamide from 5-amino-1-(5-phospho-D-ribosyl)imidazole-4-carboxamide (10-formyl THF route): step 1/1. Its pathway is purine metabolism; IMP biosynthesis via de novo pathway; IMP from 5-formamido-1-(5-phospho-D-ribosyl)imidazole-4-carboxamide: step 1/1. This chain is Bifunctional purine biosynthesis protein PurH, found in Prochlorococcus marinus subsp. pastoris (strain CCMP1986 / NIES-2087 / MED4).